Reading from the N-terminus, the 183-residue chain is Adenine phosphoribosyltransferase (183 aa).

This sequence belongs to the purine/pyrimidine phosphoribosyltransferase family. In terms of assembly, homodimer.

The protein localises to the cytoplasm. The catalysed reaction is AMP + diphosphate = 5-phospho-alpha-D-ribose 1-diphosphate + adenine. Its pathway is purine metabolism; AMP biosynthesis via salvage pathway; AMP from adenine: step 1/1. Catalyzes a salvage reaction resulting in the formation of AMP, that is energically less costly than de novo synthesis. The chain is Adenine phosphoribosyltransferase from Salmonella paratyphi C (strain RKS4594).